A 196-amino-acid polypeptide reads, in one-letter code: ATP-dependent Clp protease proteolytic subunit (196 aa).

Ser96 functions as the Nucleophile in the catalytic mechanism. His121 is a catalytic residue.

The protein belongs to the peptidase S14 family. As to quaternary structure, fourteen ClpP subunits assemble into 2 heptameric rings which stack back to back to give a disk-like structure with a central cavity, resembling the structure of eukaryotic proteasomes.

Its subcellular location is the cytoplasm. The enzyme catalyses Hydrolysis of proteins to small peptides in the presence of ATP and magnesium. alpha-casein is the usual test substrate. In the absence of ATP, only oligopeptides shorter than five residues are hydrolyzed (such as succinyl-Leu-Tyr-|-NHMec, and Leu-Tyr-Leu-|-Tyr-Trp, in which cleavage of the -Tyr-|-Leu- and -Tyr-|-Trp bonds also occurs).. Its function is as follows. Cleaves peptides in various proteins in a process that requires ATP hydrolysis. Has a chymotrypsin-like activity. Plays a major role in the degradation of misfolded proteins. This Streptococcus thermophilus (strain CNRZ 1066) protein is ATP-dependent Clp protease proteolytic subunit.